The primary structure comprises 754 residues: Neprilysin-1 (754 aa).

Residues F5–L27 traverse the membrane as a helical; Signal-anchor for type II membrane protein segment. 7 N-linked (GlcNAc...) asparagine glycosylation sites follow: N38, N81, N132, N217, N273, N303, and N441. Residues V63 to W754 enclose the Peptidase M13 domain. 4 disulfide bridges follow: C87–C739, C95–C699, C151–C414, and C624–C751. H587 contacts Zn(2+). The active site involves E588. Residue H591 coordinates Zn(2+). Residue N612 is glycosylated (N-linked (GlcNAc...) asparagine). Zn(2+) is bound at residue E649. D653 acts as the Proton donor in catalysis.

Belongs to the peptidase M13 family. Requires Zn(2+) as cofactor. As to expression, specifically expressed in pharyngeal cells and a single head neuron.

The protein resides in the membrane. Its function is as follows. Probable cell surface protease. Required to control the neuronal innervation of pharyngeal pumping. The chain is Neprilysin-1 (nep-1) from Caenorhabditis elegans.